The primary structure comprises 671 residues: UvrABC system protein B (671 aa).

Positions 25–412 (EGIEAGLAHQ…AGRVVEQVVR (388 aa)) constitute a Helicase ATP-binding domain. 38–45 (GVTGSGKT) is a binding site for ATP. Residues 91-114 (YYDYYQPEAYVPSSDTFIEKDASI) carry the Beta-hairpin motif. The region spanning 429 to 582 (QVDDLLSEIT…QIAFNLANGI (154 aa)) is the Helicase C-terminal domain. Positions 601–623 (PGSRSKKRKGMAKAAEENARYEN) are disordered. The span at 614–623 (AAEENARYEN) shows a compositional bias: basic and acidic residues. In terms of domain architecture, UVR spans 632-667 (TKRIRQLEEKMYQLARDLEFEAAAQMRDEITKLRER).

The protein belongs to the UvrB family. In terms of assembly, forms a heterotetramer with UvrA during the search for lesions. Interacts with UvrC in an incision complex.

It localises to the cytoplasm. The UvrABC repair system catalyzes the recognition and processing of DNA lesions. A damage recognition complex composed of 2 UvrA and 2 UvrB subunits scans DNA for abnormalities. Upon binding of the UvrA(2)B(2) complex to a putative damaged site, the DNA wraps around one UvrB monomer. DNA wrap is dependent on ATP binding by UvrB and probably causes local melting of the DNA helix, facilitating insertion of UvrB beta-hairpin between the DNA strands. Then UvrB probes one DNA strand for the presence of a lesion. If a lesion is found the UvrA subunits dissociate and the UvrB-DNA preincision complex is formed. This complex is subsequently bound by UvrC and the second UvrB is released. If no lesion is found, the DNA wraps around the other UvrB subunit that will check the other stand for damage. In Pseudomonas fluorescens (strain ATCC BAA-477 / NRRL B-23932 / Pf-5), this protein is UvrABC system protein B.